Here is a 235-residue protein sequence, read N- to C-terminus: Phosphoribosylaminoimidazole-succinocarboxamide synthase (235 aa).

The protein belongs to the SAICAR synthetase family.

It catalyses the reaction 5-amino-1-(5-phospho-D-ribosyl)imidazole-4-carboxylate + L-aspartate + ATP = (2S)-2-[5-amino-1-(5-phospho-beta-D-ribosyl)imidazole-4-carboxamido]succinate + ADP + phosphate + 2 H(+). It functions in the pathway purine metabolism; IMP biosynthesis via de novo pathway; 5-amino-1-(5-phospho-D-ribosyl)imidazole-4-carboxamide from 5-amino-1-(5-phospho-D-ribosyl)imidazole-4-carboxylate: step 1/2. This Streptococcus pneumoniae serotype 2 (strain D39 / NCTC 7466) protein is Phosphoribosylaminoimidazole-succinocarboxamide synthase.